The following is a 447-amino-acid chain: Phosphoglucosamine mutase (447 aa).

Serine 100 functions as the Phosphoserine intermediate in the catalytic mechanism. Mg(2+) is bound by residues serine 100, aspartate 239, aspartate 241, and aspartate 243. Phosphoserine is present on serine 100.

This sequence belongs to the phosphohexose mutase family. The cofactor is Mg(2+). Post-translationally, activated by phosphorylation.

It catalyses the reaction alpha-D-glucosamine 1-phosphate = D-glucosamine 6-phosphate. Its function is as follows. Catalyzes the conversion of glucosamine-6-phosphate to glucosamine-1-phosphate. The sequence is that of Phosphoglucosamine mutase from Dictyoglomus turgidum (strain DSM 6724 / Z-1310).